Reading from the N-terminus, the 125-residue chain is Large ribosomal subunit protein bL12 (125 aa).

It belongs to the bacterial ribosomal protein bL12 family. Homodimer. Part of the ribosomal stalk of the 50S ribosomal subunit. Forms a multimeric L10(L12)X complex, where L10 forms an elongated spine to which 2 to 4 L12 dimers bind in a sequential fashion. Binds GTP-bound translation factors.

In terms of biological role, forms part of the ribosomal stalk which helps the ribosome interact with GTP-bound translation factors. Is thus essential for accurate translation. This chain is Large ribosomal subunit protein bL12, found in Caldanaerobacter subterraneus subsp. tengcongensis (strain DSM 15242 / JCM 11007 / NBRC 100824 / MB4) (Thermoanaerobacter tengcongensis).